We begin with the raw amino-acid sequence, 468 residues long: 3-isopropylmalate dehydratase large subunit (468 aa).

C347, C407, and C410 together coordinate [4Fe-4S] cluster.

It belongs to the aconitase/IPM isomerase family. LeuC type 1 subfamily. Heterodimer of LeuC and LeuD. [4Fe-4S] cluster is required as a cofactor.

It catalyses the reaction (2R,3S)-3-isopropylmalate = (2S)-2-isopropylmalate. It participates in amino-acid biosynthesis; L-leucine biosynthesis; L-leucine from 3-methyl-2-oxobutanoate: step 2/4. Functionally, catalyzes the isomerization between 2-isopropylmalate and 3-isopropylmalate, via the formation of 2-isopropylmaleate. The protein is 3-isopropylmalate dehydratase large subunit of Campylobacter jejuni subsp. jejuni serotype O:23/36 (strain 81-176).